A 90-amino-acid chain; its full sequence is DNA-directed RNA polymerase subunit omega (90 aa).

This sequence belongs to the RNA polymerase subunit omega family. As to quaternary structure, the RNAP catalytic core consists of 2 alpha, 1 beta, 1 beta' and 1 omega subunit. When a sigma factor is associated with the core the holoenzyme is formed, which can initiate transcription.

It catalyses the reaction RNA(n) + a ribonucleoside 5'-triphosphate = RNA(n+1) + diphosphate. Functionally, promotes RNA polymerase assembly. Latches the N- and C-terminal regions of the beta' subunit thereby facilitating its interaction with the beta and alpha subunits. This Hamiltonella defensa subsp. Acyrthosiphon pisum (strain 5AT) protein is DNA-directed RNA polymerase subunit omega.